A 500-amino-acid chain; its full sequence is Potassium voltage-gated channel subfamily V member 1 (500 aa).

Over Met-1–Arg-210 the chain is Cytoplasmic. Over residues Lys-168–Glu-181 the composition is skewed to basic and acidic residues. The segment at Lys-168–Cys-189 is disordered. Residues Ile-211–Ser-231 form a helical membrane-spanning segment. At Ala-232–Asp-238 the chain is on the extracellular side. The helical transmembrane segment at Leu-239–Leu-259 threads the bilayer. Topologically, residues Arg-260–Asn-276 are cytoplasmic. A helical membrane pass occupies residues Ile-277 to Gly-297. Topologically, residues Ser-298 to Arg-309 are extracellular. The chain crosses the membrane as a helical; Voltage-sensor span at residues Ile-310–Gly-331. Topologically, residues Leu-332–Glu-345 are cytoplasmic. The chain crosses the membrane as a helical span at residues Val-346–Phe-366. Positions Thr-392–Asp-397 match the Selectivity filter motif. The helical transmembrane segment at Ile-407 to Ile-427 threads the bilayer. Residues Asn-428–Phe-500 are Cytoplasmic-facing.

Belongs to the potassium channel family. V (TC 1.A.1.2) subfamily. Kv8.1/KCNV1 sub-subfamily. In terms of assembly, heteromultimer with KCNB1 and KCNB2. Interacts with KCNC4 and KCND1. As to expression, detected in brain.

It localises to the cell membrane. Functionally, potassium channel subunit that does not form functional channels by itself. Modulates KCNB1 and KCNB2 channel activity by shifting the threshold for inactivation to more negative values and by slowing the rate of inactivation. Can down-regulate the channel activity of KCNB1, KCNB2, KCNC4 and KCND1, possibly by trapping them in intracellular membranes. The protein is Potassium voltage-gated channel subfamily V member 1 (KCNV1) of Homo sapiens (Human).